The following is a 446-amino-acid chain: Ribosomal protein uS12 methylthiotransferase RimO (446 aa).

The MTTase N-terminal domain maps to 9 to 121 (PKVGFVSLGC…VLDAIHAALP (113 aa)). Residues Cys18, Cys54, Cys83, Cys152, Cys156, and Cys159 each coordinate [4Fe-4S] cluster. Positions 138–375 (LTPPHYAYLK…MAVQEAISRQ (238 aa)) constitute a Radical SAM core domain. The 68-residue stretch at 378-445 (QRRVGQRQRV…AHDLYGMVVS (68 aa)) folds into the TRAM domain.

It belongs to the methylthiotransferase family. RimO subfamily. Requires [4Fe-4S] cluster as cofactor.

The protein localises to the cytoplasm. The catalysed reaction is L-aspartate(89)-[ribosomal protein uS12]-hydrogen + (sulfur carrier)-SH + AH2 + 2 S-adenosyl-L-methionine = 3-methylsulfanyl-L-aspartate(89)-[ribosomal protein uS12]-hydrogen + (sulfur carrier)-H + 5'-deoxyadenosine + L-methionine + A + S-adenosyl-L-homocysteine + 2 H(+). In terms of biological role, catalyzes the methylthiolation of an aspartic acid residue of ribosomal protein uS12. The protein is Ribosomal protein uS12 methylthiotransferase RimO of Acidithiobacillus ferrooxidans (strain ATCC 23270 / DSM 14882 / CIP 104768 / NCIMB 8455) (Ferrobacillus ferrooxidans (strain ATCC 23270)).